The sequence spans 360 residues: Peptide chain release factor 1 (360 aa).

At Gln-235 the chain carries N5-methylglutamine.

Belongs to the prokaryotic/mitochondrial release factor family. Post-translationally, methylated by PrmC. Methylation increases the termination efficiency of RF1.

It localises to the cytoplasm. Peptide chain release factor 1 directs the termination of translation in response to the peptide chain termination codons UAG and UAA. The sequence is that of Peptide chain release factor 1 from Burkholderia cenocepacia (strain HI2424).